Consider the following 80-residue polypeptide: MTDFTPDAILDATGLNCPEPVMMLHQHVRNLAAGGLLKVIATDPSTRRDIPKFCNFLGHELLQQQEDAGTFLYWIRKKAD.

C17 (cysteine persulfide intermediate) is an active-site residue.

Belongs to the sulfur carrier protein TusA family.

The protein resides in the cytoplasm. Sulfur carrier protein which probably makes part of a sulfur-relay system. In Pseudomonas putida (strain ATCC 47054 / DSM 6125 / CFBP 8728 / NCIMB 11950 / KT2440), this protein is Sulfur carrier protein TusA.